Reading from the N-terminus, the 494-residue chain is E3 ubiquitin-protein ligase ari-1.1 (494 aa).

Positions 1–30 (MSSDDEINMDDSDSSQGEIDDGCMSDDDGI) are enriched in acidic residues. Residues 1–52 (MSSDDEINMDDSDSSQGEIDDGCMSDDDGIVLESREQNSSDYKDNGEPDNEV) are disordered. The segment covering 33-52 (ESREQNSSDYKDNGEPDNEV) has biased composition (basic and acidic residues). Residues 124–331 (GDAECDICCS…SSWYSCNRFD (208 aa)) form a TRIAD supradomain region. Cys128, Cys131, Cys142, His144, Cys147, Cys150, Cys169, Cys174, Cys214, Cys219, Cys235, Cys237, Cys242, Cys245, His250, Cys255, Cys282, and Cys285 together coordinate Zn(2+). The RING-type 1 zinc finger occupies 128 to 174 (CDICCSLGELSGLSCNHRACTQCWKAYLTNKIANNAQSEIECMAPNC). An IBR-type zinc finger spans residues 194–255 (ATYRKLIVAS…GHDWHEPVNC (62 aa)). The RING-type 2; atypical zinc-finger motif lies at 282–313 (CPKCMITIEKDGGCNHMTCKNTACRFEFCWMC). Cys295 is an active-site residue. Zn(2+) is bound by residues Cys300, Cys305, Cys310, Cys313, His320, and Cys327. The segment at 346 to 494 (RANLQRYLFY…ADQELWVFNE (149 aa)) is ariadne domain.

Belongs to the RBR family. Ariadne subfamily. As to quaternary structure, interacts with ubiquitin-conjugating enzyme E2 ubc-18.

Its subcellular location is the nucleus. It is found in the cytoplasm. The catalysed reaction is [E2 ubiquitin-conjugating enzyme]-S-ubiquitinyl-L-cysteine + [acceptor protein]-L-lysine = [E2 ubiquitin-conjugating enzyme]-L-cysteine + [acceptor protein]-N(6)-ubiquitinyl-L-lysine.. With respect to regulation, autoinhibited by the ariadne domain, which masks the second RING-type zinc finger that contains the active site and inhibits the E3 activity. Functionally, E3 ubiquitin-protein transferase, which catalyzes ubiquitination of target proteins together with ubiquitin-conjugating enzyme E2 ubc-18. Acts with ubc-18 to regulate pharyngeal development. The protein is E3 ubiquitin-protein ligase ari-1.1 of Caenorhabditis elegans.